Consider the following 312-residue polypeptide: Probable deoxyhypusine synthase (312 aa).

Lysine 285 (nucleophile) is an active-site residue.

Belongs to the deoxyhypusine synthase family. Requires NAD(+) as cofactor.

The catalysed reaction is [eIF5A protein]-L-lysine + spermidine = [eIF5A protein]-deoxyhypusine + propane-1,3-diamine. The protein operates within protein modification; eIF5A hypusination. In terms of biological role, catalyzes the NAD-dependent oxidative cleavage of spermidine and the subsequent transfer of the butylamine moiety of spermidine to the epsilon-amino group of a specific lysine residue of the eIF-5A precursor protein to form the intermediate deoxyhypusine residue. In Saccharolobus islandicus (strain M.16.4 / Kamchatka #3) (Sulfolobus islandicus), this protein is Probable deoxyhypusine synthase.